Consider the following 250-residue polypeptide: Probable transcriptional regulatory protein Cvib_1432 (250 aa).

Belongs to the TACO1 family.

The protein resides in the cytoplasm. The sequence is that of Probable transcriptional regulatory protein Cvib_1432 from Chlorobium phaeovibrioides (strain DSM 265 / 1930) (Prosthecochloris vibrioformis (strain DSM 265)).